The sequence spans 828 residues: Periplasmic nitrate reductase (828 aa).

The segment at residues 1-31 (MKLSRRSFMKANAVAAAAAAAGLSVPGVARA) is a signal peptide (tat-type signal). Residues 39 to 95 (IKWDKAPCRFCGTGCGVLVGTQQGRVVACQGDPDAPVNRGLNCIKGYFLPKIMYGKD) enclose the 4Fe-4S Mo/W bis-MGD-type domain. [4Fe-4S] cluster-binding residues include cysteine 46, cysteine 49, cysteine 53, and cysteine 81. Residues lysine 83, glutamine 150, asparagine 175, cysteine 179, 212–219 (WGANMAEM), 243–247 (STYQH), 262–264 (QSD), methionine 372, glutamine 376, asparagine 482, 508–509 (SD), lysine 531, aspartate 558, and 718–727 (TGRVLEHWHT) each bind Mo-bis(molybdopterin guanine dinucleotide). Residue phenylalanine 794 participates in substrate binding. Mo-bis(molybdopterin guanine dinucleotide) is bound by residues asparagine 802 and lysine 819.

It belongs to the prokaryotic molybdopterin-containing oxidoreductase family. NasA/NapA/NarB subfamily. As to quaternary structure, component of the periplasmic nitrate reductase NapAB complex composed of NapA and NapB. [4Fe-4S] cluster is required as a cofactor. Requires Mo-bis(molybdopterin guanine dinucleotide) as cofactor. Post-translationally, predicted to be exported by the Tat system. The position of the signal peptide cleavage has not been experimentally proven.

Its subcellular location is the periplasm. It catalyses the reaction 2 Fe(II)-[cytochrome] + nitrate + 2 H(+) = 2 Fe(III)-[cytochrome] + nitrite + H2O. In terms of biological role, catalytic subunit of the periplasmic nitrate reductase complex NapAB. Receives electrons from NapB and catalyzes the reduction of nitrate to nitrite. This Escherichia coli O6:K15:H31 (strain 536 / UPEC) protein is Periplasmic nitrate reductase.